A 65-amino-acid polypeptide reads, in one-letter code: MPKMKSVKGAVKRFKVKKNGTIKRGSAFRSHILTKMSQKRKRNLRGPKTVHSTNVAGILSTLCKA.

The protein belongs to the bacterial ribosomal protein bL35 family.

The sequence is that of Large ribosomal subunit protein bL35 from Aliarcobacter butzleri (strain RM4018) (Arcobacter butzleri).